Reading from the N-terminus, the 842-residue chain is Elongation factor 2 (842 aa).

A tr-type G domain is found at 17 to 346; the sequence is TNVRNMSVIA…MIVLHLPSPV (330 aa). Residues 26–33, 158–161, and 213–215 each bind GTP; these read AHVDHGKS, NKVD, and SGL. An N6,N6,N6-trimethyllysine; by EFM3; alternate modification is found at Lys-509. Position 509 is an N6,N6-dimethyllysine; by EFM3; alternate (Lys-509). Residue Lys-509 is modified to N6-methyllysine; by EFM3; alternate. Position 579 is a phosphoserine (Ser-579). Residue Lys-613 is modified to N6,N6-dimethyllysine; by EFM2; alternate. Lys-613 is modified (N6-methyllysine; by EFM2; alternate). Diphthamide is present on His-699. Thr-713 and Thr-763 each carry phosphothreonine. Lys-841 is covalently cross-linked (Glycyl lysine isopeptide (Lys-Gly) (interchain with G-Cter in ubiquitin)).

This sequence belongs to the TRAFAC class translation factor GTPase superfamily. Classic translation factor GTPase family. EF-G/EF-2 subfamily. As to quaternary structure, binds to 80S ribosomes. Actively translating ribosomes show mutually exclusive binding of eIF5a (HYP2 or ANB1) and EFT1/eEF2. Interacts with the 40S ribosomal subunit protein RPL9A; the interaction is direct. Interacts with the 60S ribosomal subunit proteins RPL12A; the interaction is direct. Interacts with RPS23A; the interaction is direct. Interacts with 18S rRNA; the interaction is direct. Interacts with 25S rRNA; the interaction is direct. Interacts with RPL0. Interacts with STM1; promoting ribosome inactivation. (Microbial infection) Diphthamide can be ADP-ribosylated by diphtheria toxin and by Pseudomonas exotoxin A, thus abolishing its function.

The protein resides in the cytoplasm. The enzyme catalyses GTP + H2O = GDP + phosphate + H(+). Its pathway is protein biosynthesis; polypeptide chain elongation. With respect to regulation, inhibited by fusidic acid and sordarin, which prevent the release of eEF2 from the ribosome after the translocation step. While fusidic acid acts on all eukaryotic eEF2, sordarin specifically binds and inhibits only selected fungal eEF2. Catalyzes the GTP-dependent ribosomal translocation step during translation elongation. During this step, the ribosome changes from the pre-translocational (PRE) to the post-translocational (POST) state as the newly formed A-site-bound peptidyl-tRNA and P-site-bound deacylated tRNA move to the P and E sites, respectively. Catalyzes the coordinated movement of the two tRNA molecules, the mRNA and conformational changes in the ribosome. The polypeptide is Elongation factor 2 (EFT1) (Saccharomyces cerevisiae (strain ATCC 204508 / S288c) (Baker's yeast)).